The chain runs to 364 residues: MYIKNVHLINFRNYDDMYLELSPNTNIFVGNNAQGKTNILESIYYSSIGKSHRTNKDKDLIKWDKNNTYLRTYVSRERLDKTIDINIFKNGKKAITVNKIKIKKISELMGNLNVVMFSPEDLRIIKDSPGNRRKFLDIELCKINNVYYHDLVQYNKILSERNTALKNWNNKINDIIDIYDEQLSKYGAFIIKERNKYLDKLNIIGKNIHKKITNDLEDINFRYLTNIKDFDNAEKELLIVLKKNRKKDLERNSTSIGPHRDDFEVSINNIDTRIFGSQGQQRTAVLTLKFASLEIIKNIIGEYPVLLLDDVLSELDSNRQKFVLNSIDKIQTIITCTGIEEIDKYLDKKQSQLYLVNNGKIKRV.

ATP is bound at residue 30 to 37; that stretch reads GNNAQGKT.

Belongs to the RecF family.

The protein localises to the cytoplasm. Its function is as follows. The RecF protein is involved in DNA metabolism; it is required for DNA replication and normal SOS inducibility. RecF binds preferentially to single-stranded, linear DNA. It also seems to bind ATP. This is DNA replication and repair protein RecF from Clostridium botulinum (strain ATCC 19397 / Type A).